The chain runs to 949 residues: Bifunctional uridylyltransferase/uridylyl-removing enzyme (949 aa).

The uridylyltransferase stretch occupies residues 1-377 (MARHETSFPE…RFRNRVRKIP (377 aa)). The segment at 378-733 (GTLDFVDDGG…VRTHDFHAIT (356 aa)) is uridylyl-removing. The HD domain occupies 494 to 610 (VDEHLLRAVD…VDFAERVQSL (117 aa)). ACT domains lie at 734 to 815 (EITV…DVIA) and 845 to 926 (VIEV…ERMP). Residues 925-949 (MPSGIIAPTPVPRASHGSKATKAET) form a disordered region.

It belongs to the GlnD family. Requires Mg(2+) as cofactor.

It catalyses the reaction [protein-PII]-L-tyrosine + UTP = [protein-PII]-uridylyl-L-tyrosine + diphosphate. It carries out the reaction [protein-PII]-uridylyl-L-tyrosine + H2O = [protein-PII]-L-tyrosine + UMP + H(+). Its activity is regulated as follows. Uridylyltransferase (UTase) activity is inhibited by glutamine, while glutamine activates uridylyl-removing (UR) activity. Functionally, modifies, by uridylylation and deuridylylation, the PII regulatory proteins (GlnB and homologs), in response to the nitrogen status of the cell that GlnD senses through the glutamine level. Under low glutamine levels, catalyzes the conversion of the PII proteins and UTP to PII-UMP and PPi, while under higher glutamine levels, GlnD hydrolyzes PII-UMP to PII and UMP (deuridylylation). Thus, controls uridylylation state and activity of the PII proteins, and plays an important role in the regulation of nitrogen fixation and metabolism. The chain is Bifunctional uridylyltransferase/uridylyl-removing enzyme from Sinorhizobium medicae (strain WSM419) (Ensifer medicae).